We begin with the raw amino-acid sequence, 422 residues long: 3-phosphoshikimate 1-carboxyvinyltransferase (422 aa).

Residues K20, S21, and R25 each coordinate 3-phosphoshikimate. K20 contacts phosphoenolpyruvate. Residues G91 and R119 each contribute to the phosphoenolpyruvate site. 6 residues coordinate 3-phosphoshikimate: T163, S164, Q165, D305, Q328, and K332. Residue Q165 coordinates phosphoenolpyruvate. Catalysis depends on D305, which acts as the Proton acceptor. Phosphoenolpyruvate contacts are provided by R336 and R377.

The protein belongs to the EPSP synthase family. As to quaternary structure, monomer.

It is found in the cytoplasm. The enzyme catalyses 3-phosphoshikimate + phosphoenolpyruvate = 5-O-(1-carboxyvinyl)-3-phosphoshikimate + phosphate. The protein operates within metabolic intermediate biosynthesis; chorismate biosynthesis; chorismate from D-erythrose 4-phosphate and phosphoenolpyruvate: step 6/7. Catalyzes the transfer of the enolpyruvyl moiety of phosphoenolpyruvate (PEP) to the 5-hydroxyl of shikimate-3-phosphate (S3P) to produce enolpyruvyl shikimate-3-phosphate and inorganic phosphate. The polypeptide is 3-phosphoshikimate 1-carboxyvinyltransferase (Ruminiclostridium cellulolyticum (strain ATCC 35319 / DSM 5812 / JCM 6584 / H10) (Clostridium cellulolyticum)).